The chain runs to 163 residues: Ribonuclease H (163 aa).

One can recognise an RNase H type-1 domain in the interval 1–142; that stretch reads MRKQVAIFTD…CDELARTAAC (142 aa). Asp-10, Glu-48, Asp-70, and Asp-134 together coordinate Mg(2+).

This sequence belongs to the RNase H family. Monomer. Requires Mg(2+) as cofactor.

The protein localises to the cytoplasm. It catalyses the reaction Endonucleolytic cleavage to 5'-phosphomonoester.. In terms of biological role, endonuclease that specifically degrades the RNA of RNA-DNA hybrids. The sequence is that of Ribonuclease H from Sodalis glossinidius (strain morsitans).